The primary structure comprises 470 residues: Putative ankyrin repeat protein L279 (470 aa).

ANK repeat units lie at residues 119-148 (RDDYMLEWACAGNFTEVARYLLKIGANPGT), 149-178 (NKYACFESAVRNGNYDMVKLLLENIPGSDK), 372-401 (ETQGLLTNACQYNNSELVKYLLEKGANVNE), and 403-431 (NGKPLREAIKNNNKDIIKNLMDYSPDISL).

This is Putative ankyrin repeat protein L279 from Acanthamoeba polyphaga (Amoeba).